The following is a 286-amino-acid chain: 4-hydroxy-3-methylbut-2-enyl diphosphate reductase (286 aa).

Cys12 provides a ligand contact to [4Fe-4S] cluster. (2E)-4-hydroxy-3-methylbut-2-enyl diphosphate contacts are provided by His46 and His79. The dimethylallyl diphosphate site is built by His46 and His79. Residues His46 and His79 each contribute to the isopentenyl diphosphate site. Residue Cys101 coordinates [4Fe-4S] cluster. His129 provides a ligand contact to (2E)-4-hydroxy-3-methylbut-2-enyl diphosphate. A dimethylallyl diphosphate-binding site is contributed by His129. Isopentenyl diphosphate is bound at residue His129. The Proton donor role is filled by Glu131. Thr169 lines the (2E)-4-hydroxy-3-methylbut-2-enyl diphosphate pocket. Cys198 is a [4Fe-4S] cluster binding site. Residues Ser226, Asn228, and Ser270 each contribute to the (2E)-4-hydroxy-3-methylbut-2-enyl diphosphate site. Residues Ser226, Asn228, and Ser270 each coordinate dimethylallyl diphosphate. Residues Ser226, Asn228, and Ser270 each coordinate isopentenyl diphosphate.

It belongs to the IspH family. The cofactor is [4Fe-4S] cluster.

The catalysed reaction is isopentenyl diphosphate + 2 oxidized [2Fe-2S]-[ferredoxin] + H2O = (2E)-4-hydroxy-3-methylbut-2-enyl diphosphate + 2 reduced [2Fe-2S]-[ferredoxin] + 2 H(+). It catalyses the reaction dimethylallyl diphosphate + 2 oxidized [2Fe-2S]-[ferredoxin] + H2O = (2E)-4-hydroxy-3-methylbut-2-enyl diphosphate + 2 reduced [2Fe-2S]-[ferredoxin] + 2 H(+). It participates in isoprenoid biosynthesis; dimethylallyl diphosphate biosynthesis; dimethylallyl diphosphate from (2E)-4-hydroxy-3-methylbutenyl diphosphate: step 1/1. Its pathway is isoprenoid biosynthesis; isopentenyl diphosphate biosynthesis via DXP pathway; isopentenyl diphosphate from 1-deoxy-D-xylulose 5-phosphate: step 6/6. Functionally, catalyzes the conversion of 1-hydroxy-2-methyl-2-(E)-butenyl 4-diphosphate (HMBPP) into a mixture of isopentenyl diphosphate (IPP) and dimethylallyl diphosphate (DMAPP). Acts in the terminal step of the DOXP/MEP pathway for isoprenoid precursor biosynthesis. This is 4-hydroxy-3-methylbut-2-enyl diphosphate reductase from Solidesulfovibrio magneticus (strain ATCC 700980 / DSM 13731 / RS-1) (Desulfovibrio magneticus).